A 65-amino-acid polypeptide reads, in one-letter code: UPF0434 protein bsr0601 (65 aa).

The protein belongs to the UPF0434 family.

In Bradyrhizobium diazoefficiens (strain JCM 10833 / BCRC 13528 / IAM 13628 / NBRC 14792 / USDA 110), this protein is UPF0434 protein bsr0601.